A 714-amino-acid polypeptide reads, in one-letter code: METSVSEIQIETKDEKRPEAASPQKERQERKTATLCFKRRKKVNKKKAKAGSKTAEETEKHAPEAGGSGQRQPAGAWASIKRLVTHRKPSESAEKQKPSEAEMQPEDGALPKKKTKSKLKIPCIRFSRGAKRSRPSKLTEDSGYVRVQGEADDLEIKAQIQPDEQATQAKSTQGLQEDVIVRDGKEIQESHISNNVISGEHVIGIELELEKESSALRMRTPGSEKEAKVILVKQGVQVQEASVLENSAADSPQPVTSTAPLSPATTHQLGLEEPSDSIRESAPSGKDDGRRKTAAEEKKSGETALGQAEEASSVSQADKSVLSQAEEATVGHTEEATVIQAQSQAKEGKLSQAEEATVAQAKETVLSQAEEVKLSQIEEPAISQAKKATVGQAKEAYVSQAEEAIVGHTEKATMGQAEEATVGHIEKTTVGQAEEATVGQAEEATVGQAEEATVGQAEEATVGQAEEATVGQAGEATVSHIEKTTVGQAEEAIVGQAEEATVGQAEEATVGQAEEATVGQAEEATVDQAEEATVGQAEEATVGQAGEAAVGQAEEAIVAQAEEATVGQAGEATVGQAEKATVGQAEEPIVGQAEETVLRHASDLKVNGVDAEKPRSEESKRMEPIAIIITDTEISEFDVKKSKNVPKQFLISMENEQVGVFANDSDFEGRTSEQYETLLIETASSLVKNAIELSVEQLVNEMVSEDNQINTLFQ.

Disordered regions lie at residues 1–146 and 243–333; these read METS…GYVR and VLEN…VGHT. Positions 1–164 are essential to the intracellular anchoring function; the sequence is METSVSEIQI…EIKAQIQPDE (164 aa). Residues S4 and S22 each carry the phosphoserine modification. Basic and acidic residues predominate over residues 10–32; that stretch reads IETKDEKRPEAASPQKERQERKT. A lipid anchor (S-palmitoyl cysteine) is attached at C36. A compositionally biased stretch (basic residues) spans 37–50; it reads FKRRKKVNKKKAKA. Composition is skewed to basic and acidic residues over residues 54–63 and 88–100; these read TAEETEKHAP and KPSE…KPSE. The AKAP CaM-binding motif lies at 74 to 94; sequence AGAWASIKRLVTHRKPSESAE. The S-palmitoyl cysteine moiety is linked to residue C123. Positions 243–268 are enriched in polar residues; that stretch reads VLENSAADSPQPVTSTAPLSPATTHQ. Positions 285–301 are enriched in basic and acidic residues; it reads GKDDGRRKTAAEEKKSG. Residues 305-312 form a 1; approximate repeat; that stretch reads LGQAEEAS. A 28 X 8 AA repeats of V-G-Q-A-E-E-A-T region spans residues 305-597; the sequence is LGQAEEASSV…PIVGQAEETV (293 aa). Polar residues predominate over residues 310–323; sequence EASSVSQADKSVLS. The 2; approximate repeat unit spans residues 322 to 329; that stretch reads LSQAEEAT. The 3; approximate repeat unit spans residues 330–337; sequence VGHTEEAT. The 4; approximate repeat unit spans residues 350 to 357; the sequence is LSQAEEAT. Residues 358–365 form a 5; approximate repeat; sequence VAQAKETV. A 6; approximate repeat occupies 366 to 373; sequence LSQAEEVK. One copy of the 7; approximate repeat lies at 398–405; sequence VSQAEEAI. The 8; approximate repeat unit spans residues 414-421; it reads MGQAEEAT. 5 tandem repeats follow at residues 430–437, 438–445, 446–453, 454–461, and 462–469. The stretch at 470–477 is one 14; approximate repeat; that stretch reads VGQAGEAT. One copy of the 15; approximate repeat lies at 486–493; sequence VGQAEEAI. 4 consecutive repeat copies span residues 494-501, 502-509, 510-517, and 518-525. One copy of the 20; approximate repeat lies at 526–533; that stretch reads VDQAEEAT. Repeat 21 spans residues 534 to 541; the sequence is VGQAEEAT. One copy of the 22; approximate repeat lies at 542-549; sequence VGQAGEAA. The 23; approximate repeat unit spans residues 550–557; sequence VGQAEEAI. The 24; approximate repeat unit spans residues 558 to 565; the sequence is VAQAEEAT. Residues 566–573 form repeat 25; the sequence is VGQAGEAT. One copy of the 26; approximate repeat lies at 574–581; the sequence is VGQAEKAT. A 27; approximate repeat occupies 582–589; it reads VGQAEEPI. Residues 590-597 form a 28; approximate repeat; it reads VGQAEETV. Positions 675 to 696 are RII-beta subunit binding domain; the sequence is YETLLIETASSLVKNAIELSVE. The segment at 697 to 714 is tethers NFATC2 to CRAC channels; sequence QLVNEMVSEDNQINTLFQ.

In terms of assembly, binding protein for dimer of the RII-beta regulatory subunit of cAMP-dependent protein kinase (PKA) and also for the protein kinase C (PKC) and the phosphatase calcineurin (PP2B). Each enzyme is inhibited when bound to the anchoring protein. Also binds the beta2-adrenergic receptor. Part of a complex containing AKAP5, ADCY5, ADCY6 and PDE4C. Interacts with ADCY8, and enhances its phosphorylation at lipid rafts. Interacts with ORAI1 (isoform alpha) (via N-terminus) upon store depletion and in response to LTC4. Does not interact with ORAI2 and ORAI3 paralogs. Interacts (via leucine zipper domain) with NFATC2/NFAT1. Interacts with calmodulin; the interaction is calcium-independent. Interacts with KCNQ2; the interaction may help KCNQ2 channel complex to retain calcium-bound calmodulin. Interacts with KCNK2; the channel is recruited to postsynaptic microdomains by AKAP5 where it can integrate neurotransmitter receptor signals. Part of a complex composed of AKAP5 and ADRB2. In terms of processing, palmitoylated. Palmitoylation at Cys-36 and Cys-123 plays a key role in the targeting of AKAP5 to lipid rafts. Palmitoylation by ZDHHC2 is required for AKAP5 function in LTP-stimulated recycling endosome exocytosis.

It localises to the postsynaptic recycling endosome membrane. Its subcellular location is the cell projection. The protein localises to the dendrite. The protein resides in the postsynaptic cell membrane. Multivalent scaffold protein that anchors the cAMP-dependent protein kinase/PKA to cytoskeletal and/or organelle-associated proteins, targeting the signal carried by cAMP to specific intracellular effectors. Association with the beta2-adrenergic receptor (beta2-AR) not only regulates beta2-AR signaling pathway, but also the activation by PKA by switching off the beta2-AR signaling cascade. Plays a role in long term synaptic potentiation by regulating protein trafficking from the dendritic recycling endosomes to the plasma membrane and controlling both structural and functional plasticity at excitatory synapses. In hippocampal pyramidal neurons, recruits KCNK2/TREK-1 channel at postsynaptic dense bodies microdomains and converts it to a leak channel no longer sensitive to stimulation by arachidonic acid, acidic pH or mechanical stress, nor inhibited by Gq-coupled receptors but still under the negative control of Gs-coupled receptors. Associates with ORAI1 pore-forming subunit of CRAC channels in Ca(2+) signaling microdomains where it recruits NFATC2/NFAT1 and couples store-operated Ca(2+) influx to calmodulin and calcineurin signaling and activation of NFAT-dependent transcriptional responses. The sequence is that of A-kinase anchor protein 5 (Akap5) from Rattus norvegicus (Rat).